A 425-amino-acid chain; its full sequence is Trigger factor (425 aa).

Positions 158 to 231 (GDLVRVNMEV…VEEVYKRTLP (74 aa)) constitute a PPIase FKBP-type domain.

The protein belongs to the FKBP-type PPIase family. Tig subfamily.

Its subcellular location is the cytoplasm. It carries out the reaction [protein]-peptidylproline (omega=180) = [protein]-peptidylproline (omega=0). In terms of biological role, involved in protein export. Acts as a chaperone by maintaining the newly synthesized protein in an open conformation. Functions as a peptidyl-prolyl cis-trans isomerase. This is Trigger factor from Thermotoga petrophila (strain ATCC BAA-488 / DSM 13995 / JCM 10881 / RKU-1).